A 481-amino-acid polypeptide reads, in one-letter code: Cobyric acid synthase (481 aa).

The GATase cobBQ-type domain maps to 244-431; that stretch reads VLRVVIPVLP…LHGLFDAPEA (188 aa). Cys-325 functions as the Nucleophile in the catalytic mechanism. Residue His-423 is part of the active site.

The protein belongs to the CobB/CobQ family. CobQ subfamily.

The protein operates within cofactor biosynthesis; adenosylcobalamin biosynthesis. Its function is as follows. Catalyzes amidations at positions B, D, E, and G on adenosylcobyrinic A,C-diamide. NH(2) groups are provided by glutamine, and one molecule of ATP is hydrogenolyzed for each amidation. The protein is Cobyric acid synthase of Ralstonia nicotianae (strain ATCC BAA-1114 / GMI1000) (Ralstonia solanacearum).